Here is a 193-residue protein sequence, read N- to C-terminus: Cilia- and flagella-associated protein 20 (193 aa).

It belongs to the CFAP20 family. In terms of assembly, microtubule inner protein component of sperm flagellar doublet microtubules.

The protein localises to the nucleus. Its subcellular location is the cytoplasm. The protein resides in the cytoskeleton. It is found in the microtubule organizing center. It localises to the centrosome. The protein localises to the centriole. Its subcellular location is the cilium basal body. The protein resides in the cilium axoneme. It is found in the flagellum axoneme. Cilium- and flagellum-specific protein that plays a role in axonemal structure organization and motility. Microtubule inner protein (MIP) part of the dynein-decorated doublet microtubules (DMTs) in cilia axoneme, which is required for motile cilia beating. Involved in the regulation of the size and morphology of cilia. Required for axonemal microtubules polyglutamylation. The sequence is that of Cilia- and flagella-associated protein 20 from Homo sapiens (Human).